Here is a 137-residue protein sequence, read N- to C-terminus: Large ribosomal subunit protein uL16 (137 aa).

The protein belongs to the universal ribosomal protein uL16 family. In terms of assembly, part of the 50S ribosomal subunit.

Functionally, binds 23S rRNA and is also seen to make contacts with the A and possibly P site tRNAs. The protein is Large ribosomal subunit protein uL16 of Allorhizobium ampelinum (strain ATCC BAA-846 / DSM 112012 / S4) (Agrobacterium vitis (strain S4)).